A 236-amino-acid polypeptide reads, in one-letter code: Chorionic somatomammotropin hormone 1 (236 aa).

An N-terminal signal peptide occupies residues 1-36 (MAPASSHRGHQWICDLVRGSCLLLLLVVSNLLLCQG). Asparagine 89 carries an N-linked (GlcNAc...) asparagine glycan. 2 disulfide bridges follow: cysteine 98/cysteine 214 and cysteine 231/cysteine 236.

It belongs to the somatotropin/prolactin family.

The protein localises to the secreted. This chain is Chorionic somatomammotropin hormone 1 (CSH1), found in Bos taurus (Bovine).